The sequence spans 996 residues: MENLRRAVHPNKDNSRRVEHILKLWVIEAKDLPAKKKYLCELCLDDVLYARTTGKLKTDNVFWGEHFEFHNLPPLRTVTVHLYRETDKKKKKERNSYLGLVSLPAASVAGRQFVEKWYPVVTPNPKGGKGPGPMIRIKARYQTITILPMEMYKEFAEHITNHYLGLCAALEPILSAKTKEEMASALVHILQSTGKVKDFLTDLMMSEVDRCGDNEHLIFRENTLATKAIEEYLKLVGQKYLQDALGEFIKALYESDENCEVDPSKCSAADLPEHQGNLKMCCELAFCKIINSYCVFPRELKEVFASWRQECSSRGRPDISERLISASLFLRFLCPAIMSPSLFNLLQEYPDDRTARTLTLIAKVTQNLANFAKFGSKEEYMSFMNQFLEHEWTNMQRFLLEISNPETLSNTAGFEGYIDLGRELSSLHSLLWEAVSQLDQSIVSKLGPLPRILRDVHTALSTPGSGQLPGTNDLASTPGSGSSSVSAGLQKMVIENDLSGLIDFTRLPSPTPENKDLFFVTRSSGVQPSPARSSSYSEANEPDLQMANGSKSLSMVDLQDARTLDGEAGSPVGPEALPADGQVPATQLVAGWPARAAPVSLAGLATVRRAVPTPTTPGTSEGAPGRPQLLAPLSFQNPVYQMAAGLPLSPRGLGDSGSEGHSSLSSHSNSEELAAAAKLGSFSTAAEELARRPGELARRQMSLTEKGGQPTVPRQNSAGPQRRIDQPPPPPPPPPPAPRGRTPPTMLSTLQYPRPSSGTLASASPDWAGPGTRLRQQSSSSKGDSPELKPRALHKQGPSPVSPNALDRTAAWLLTMNAQLLEDEGLGPDPPHRDRLRSKEELSQAEKDLAVLQDKLRISTKKLEEYETLFKCQEETTQKLVLEYQARLEEGEERLRRQQEDKDVQMKGIISRLMSVEEELKKDHAEMQAAVDSKQKIIDAQEKRIASLDAANARLMSALTQLKERYSMRARNGVSPTNPTKLQITENGEFRNSSNC.

The region spanning 1-118 (MENLRRAVHP…AGRQFVEKWY (118 aa)) is the C2 domain. Residues 194 to 402 (GKVKDFLTDL…TNMQRFLLEI (209 aa)) enclose the Ras-GAP domain. The necessary for interaction with AKT1 stretch occupies residues 453-750 (LRDVHTALST…RTPPTMLSTL (298 aa)). Residues 460–475 (LSTPGSGQLPGTNDLA) are compositionally biased toward polar residues. 2 disordered regions span residues 460–486 (LSTP…SSVS) and 522–545 (RSSG…PDLQ). A compositionally biased stretch (low complexity) spans 476–486 (STPGSGSSSVS). The span at 522–538 (RSSGVQPSPARSSSYSE) shows a compositional bias: polar residues. Ser535 is modified (phosphoserine; by MAP3K5 and RIPK1). Ser554 carries the post-translational modification Phosphoserine. Disordered regions lie at residues 611 to 630 (VPTP…PQLL), 650 to 672 (PRGL…NSEE), 702 to 805 (SLTE…SPNA), 822 to 841 (EDEG…SKEE), and 971 to 996 (RNGV…SSNC). Low complexity predominate over residues 659–672 (EGHSSLSSHSNSEE). The span at 726 to 738 (QPPPPPPPPPPAP) shows a compositional bias: pro residues. 2 stretches are compositionally biased toward polar residues: residues 746 to 762 (MLST…TLAS) and 774 to 783 (LRQQSSSSKG). Ser785 and Ser802 each carry phosphoserine. The span at 830-841 (PPHRDRLRSKEE) shows a compositional bias: basic and acidic residues. Residues 832–966 (HRDRLRSKEE…SALTQLKERY (135 aa)) are a coiled coil. The segment covering 974–996 (VSPTNPTKLQITENGEFRNSSNC) has biased composition (polar residues).

On plasma membrane, exists in an inactive form complexed with TNFR1; in response to TNF-alpha, dissociates from TNFR1 complex, translocates to cytoplasm and forms part of an intracellular signaling complex comprising TRADD, RIPK1, TRAF2 and MAP3K5. Interacts (via NPXY motif) with DAB2 (via PID domain). Interacts (via PH domain) with ERN1. Part of a cytoplasmic complex made of HIPK1, DAB2IP and MAP3K5 in response to TNF-alpha; this complex formation promotes MAP3K5-JNK activation and subsequent apoptosis. Interacts (via N-terminal domain) with JAK2; the interaction occurs in a IFNG/IFN-gamma-dependent manner and inhibits JAK2 autophosphorylation activity. Interacts (via C2 domain) with GSK3B; the interaction stimulates GSK3B kinase activation. Interacts (via C2 domain) with PPP2CA. Interacts (via proline-rich motif) with a regulatory p85 subunit (via SH3 domain) of the PI3K complex; the interaction inhibits the PI3K-AKT complex activity in a TNF-alpha-dependent manner in prostate cancer (PCa) cells. Interacts with AKT1; the interaction is increased in a TNF-alpha-induced manner. Interacts (via C2 domain and active form preferentially) with KDR/VEGFR2 (tyrosine-phosphorylated active form preferentially); the interaction occurs at the late phase of VEGFA response and inhibits KDR/VEGFR2 activity. Interacts (via N-terminus C2 domain) with MAP3K5 ('Ser-966' dephosphorylated form preferentially); the interaction occurs in a TNF-alpha-induced manner. Interacts (via Ras-GAP domain) with the catalytic subunit of protein phosphatase PP2A; the interaction occurs in resting endothelial cells, is further enhanced by TNF-alpha stimulation and is required to bridge PP2A to MAP3K5. Interacts (via C-terminus PER domain) with TRAF2 (via zinc fingers); the interaction occurs in a TNF-alpha-dependent manner. Interacts with 14-3-3 proteins; the interaction occurs in a TNF-alpha-dependent manner. Interacts (via Ras-GAP domain) with RIPK1 (via kinase domain); the interaction occurs in a TNF-alpha-dependent manner. Interacts with DAB1 and DAB2. Interacts with RAB40C; acts as a GAP for RAB40C. In terms of processing, in response to TNF-alpha-induction, phosphorylated at Ser-535; phosphorylation leads to a conformational change, and thus, increases its association with 14-3-3 proteins, MAP3K5, RIPK1 and TRAF2 in endothelial cells; also stimulates regulatory p85 subunit sequestring and PI3K-p85 complex activity inhibition. In terms of tissue distribution, expressed in brain, lung, thymus, bladder and skeletal muscle. Up-regulatedd during prostate degeneration.

Its subcellular location is the cytoplasm. The protein resides in the cell membrane. The protein localises to the membrane. It is found in the cell projection. It localises to the dendrite. Its function is as follows. Functions as a scaffold protein implicated in the regulation of a large spectrum of both general and specialized signaling pathways. Involved in several processes such as innate immune response, inflammation and cell growth inhibition, apoptosis, cell survival, angiogenesis, cell migration and maturation. Also plays a role in cell cycle checkpoint control; reduces G1 phase cyclin levels resulting in G0/G1 cell cycle arrest. Mediates signal transduction by receptor-mediated inflammatory signals, such as the tumor necrosis factor (TNF), interferon (IFN) or lipopolysaccharide (LPS). Modulates the balance between phosphatidylinositol 3-kinase (PI3K)-AKT-mediated cell survival and apoptosis stimulated kinase (MAP3K5)-JNK signaling pathways; sequesters both AKT1 and MAP3K5 and counterbalances the activity of each kinase by modulating their phosphorylation status in response to pro-inflammatory stimuli. Acts as a regulator of the endoplasmic reticulum (ER) unfolded protein response (UPR) pathway; specifically involved in transduction of the ER stress-response to the JNK cascade through ERN1. Mediates TNF-alpha-induced apoptosis activation by facilitating dissociation of inhibitor 14-3-3 from MAP3K5; recruits the PP2A phosphatase complex which dephosphorylates MAP3K5 on 'Ser-966', leading to the dissociation of 13-3-3 proteins and activation of the MAP3K5-JNK signaling pathway in endothelial cells. Acts a negative regulator in the IFN-gamma-mediated JAK-STAT signaling cascade by inhibiting smooth muscle cell (VSMCs) proliferation and intimal expansion, and thus, prevents graft arteriosclerosis (GA). Acts as a GTPase-activating protein (GAP) for the ADP ribosylation factor 6 (ARF6). Promotes hydrolysis of the ARF6-bound GTP and thus, negatively regulates phosphatidylinositol 4,5-bisphosphate (PIP2)-dependent TLR4-TIRAP-MyD88 and NF-kappa-B signaling pathways in endothelial cells in response to lipopolysaccharides (LPS). Binds specifically to phosphatidylinositol 4-phosphate (PtdIns4P) and phosphatidylinositol 3-phosphate (PtdIns3P). In response to vascular endothelial growth factor (VEGFA), acts as a negative regulator of the VEGFR2-PI3K-mediated angiogenic signaling pathway by inhibiting endothelial cell migration and tube formation. In the developing brain, promotes both the transition from the multipolar to the bipolar stage and the radial migration of cortical neurons from the ventricular zone toward the superficial layer of the neocortex in a glial-dependent locomotion process. Probable downstream effector of the Reelin signaling pathway; promotes Purkinje cell (PC) dendrites development and formation of cerebellar synapses. Also functions as a tumor suppressor protein in prostate cancer progression; prevents cell proliferation and epithelial-to-mesenchymal transition (EMT) through activation of the glycogen synthase kinase-3 beta (GSK3B)-induced beta-catenin and inhibition of PI3K-AKT and Ras-MAPK survival downstream signaling cascades, respectively. Mediates TNF/TRAF2-induced MAP3K5-JNK activation, while it inhibits CHUK-NF-kappa-B signaling. Functions as a Ras GTPase-activating protein. May act as a tumor suppressor gene. This chain is Disabled homolog 2-interacting protein (Dab2ip), found in Rattus norvegicus (Rat).